The sequence spans 227 residues: Glutathione S-transferase U17 (227 aa).

In terms of domain architecture, GST N-terminal spans 4–83 (SDVKLIGAWA…YIDDTWSSSG (80 aa)). Residues 14 to 15 (SP), 40 to 41 (SK), 54 to 55 (KI), and 67 to 68 (ES) each bind glutathione. In terms of domain architecture, GST C-terminal spans 90 to 222 (DPYDRAMARF…KLAEFAKKIF (133 aa)).

It belongs to the GST superfamily. Tau family.

It is found in the cytoplasm. The protein resides in the cytosol. The enzyme catalyses RX + glutathione = an S-substituted glutathione + a halide anion + H(+). Involved in light signaling, mainly phyA-mediated photomorphogenesis and in the integration of various phytohormone signals to modulate various aspects of plant development by affecting glutathione pools. In vitro, possesses glutathione S-transferase activity toward 1-chloro-2,4-dinitrobenzene (CDNB) and benzyl isothiocyanate (BITC). The chain is Glutathione S-transferase U17 (GSTU17) from Arabidopsis thaliana (Mouse-ear cress).